Reading from the N-terminus, the 685-residue chain is uncharacterized protein (685 aa).

Disordered regions lie at residues 502–538 (NLNQ…SLNK) and 635–685 (RSKR…IHNA). Residues 518–538 (SSENMTKFPSSRGKSTVSLNK) show a composition bias toward polar residues. Residues 675 to 685 (KLKKSLIIHNA) show a composition bias toward basic residues.

This is an uncharacterized protein from Homo sapiens (Human).